The sequence spans 345 residues: Histidinol-phosphate aminotransferase (345 aa).

K205 carries the N6-(pyridoxal phosphate)lysine modification.

It belongs to the class-II pyridoxal-phosphate-dependent aminotransferase family. Histidinol-phosphate aminotransferase subfamily. As to quaternary structure, homodimer. Pyridoxal 5'-phosphate serves as cofactor.

The catalysed reaction is L-histidinol phosphate + 2-oxoglutarate = 3-(imidazol-4-yl)-2-oxopropyl phosphate + L-glutamate. Its pathway is amino-acid biosynthesis; L-histidine biosynthesis; L-histidine from 5-phospho-alpha-D-ribose 1-diphosphate: step 7/9. The polypeptide is Histidinol-phosphate aminotransferase (Parabacteroides distasonis (strain ATCC 8503 / DSM 20701 / CIP 104284 / JCM 5825 / NCTC 11152)).